We begin with the raw amino-acid sequence, 509 residues long: Steroid 17-alpha-hydroxylase/17,20 lyase (509 aa).

A substrate-binding site is contributed by N202. C442 is a binding site for heme.

The protein belongs to the cytochrome P450 family. Heme serves as cofactor.

It localises to the endoplasmic reticulum membrane. The protein localises to the microsome membrane. It catalyses the reaction a C21-steroid + reduced [NADPH--hemoprotein reductase] + O2 = a 17alpha-hydroxy-C21-steroid + oxidized [NADPH--hemoprotein reductase] + H2O + H(+). The catalysed reaction is progesterone + reduced [NADPH--hemoprotein reductase] + O2 = 17alpha-hydroxyprogesterone + oxidized [NADPH--hemoprotein reductase] + H2O + H(+). It carries out the reaction pregnenolone + reduced [NADPH--hemoprotein reductase] + O2 = 17alpha-hydroxypregnenolone + oxidized [NADPH--hemoprotein reductase] + H2O + H(+). The enzyme catalyses 17alpha-hydroxyprogesterone + reduced [NADPH--hemoprotein reductase] + O2 = androst-4-ene-3,17-dione + acetate + oxidized [NADPH--hemoprotein reductase] + H2O + 2 H(+). It catalyses the reaction 17alpha-hydroxyprogesterone + reduced [NADPH--hemoprotein reductase] + O2 = 16alpha,17alpha-dihydroxyprogesterone + oxidized [NADPH--hemoprotein reductase] + H2O + H(+). The catalysed reaction is 16alpha,17alpha-dihydroxyprogesterone + reduced [NADPH--hemoprotein reductase] + O2 = 6beta,16alpha,17alpha-trihydroxyprogesterone + oxidized [NADPH--hemoprotein reductase] + H2O + H(+). It carries out the reaction 17alpha-hydroxypregnenolone + reduced [NADPH--hemoprotein reductase] + O2 = 3beta-hydroxyandrost-5-en-17-one + acetate + oxidized [NADPH--hemoprotein reductase] + H2O + 2 H(+). The enzyme catalyses 16alpha,17alpha-dihydroxypregnenolone + reduced [NADPH--hemoprotein reductase] + O2 = 3beta,16alpha-dihydroxy-androst-5-en-17-one + acetate + oxidized [NADPH--hemoprotein reductase] + H2O + 2 H(+). It catalyses the reaction 3beta-hydroxyandrost-5-en-17-one + reduced [NADPH--hemoprotein reductase] + O2 = 3beta,16alpha-dihydroxy-androst-5-en-17-one + oxidized [NADPH--hemoprotein reductase] + H2O + H(+). The catalysed reaction is androst-4-ene-3,17-dione + reduced [NADPH--hemoprotein reductase] + O2 = 16alpha-hydroxyandrost-4-ene-3,17-dione + oxidized [NADPH--hemoprotein reductase] + H2O + H(+). The protein operates within steroid hormone biosynthesis. It participates in steroid biosynthesis; glucocorticoid biosynthesis. Its activity is regulated as follows. Regulated predominantly by intracellular cAMP levels. The 17,20-lyase activity is stimulated by cytochrome b5, which acts as an allosteric effector increasing the Vmax of the lyase activity. A cytochrome P450 monooxygenase involved in corticoid and androgen biosynthesis. Catalyzes 17-alpha hydroxylation of C21 steroids, which is common for both pathways. A second oxidative step, required only for androgen synthesis, involves an acyl-carbon cleavage. The 17-alpha hydroxy intermediates, as part of adrenal glucocorticoids biosynthesis pathway, are precursors of cortisol. Hydroxylates steroid hormones, pregnenolone and progesterone to form 17-alpha hydroxy metabolites, followed by the cleavage of the C17-C20 bond to form C19 steroids, dehydroepiandrosterone (DHEA) and androstenedione. Has 16-alpha hydroxylase activity. Catalyzes 16-alpha hydroxylation of 17-alpha hydroxy pregnenolone, followed by the cleavage of the C17-C20 bond to form 16-alpha-hydroxy DHEA. Also 16-alpha hydroxylates androgens, relevant for estriol synthesis. Mechanistically, uses molecular oxygen inserting one oxygen atom into a substrate, and reducing the second into a water molecule, with two electrons provided by NADPH via cytochrome P450 reductase (CPR; NADPH-ferrihemoprotein reductase). This Capra hircus (Goat) protein is Steroid 17-alpha-hydroxylase/17,20 lyase (CYP17A1).